Consider the following 409-residue polypeptide: Putative fatty acyl-CoA reductase 7 (409 aa).

Belongs to the fatty acyl-CoA reductase family.

This Arabidopsis thaliana (Mouse-ear cress) protein is Putative fatty acyl-CoA reductase 7 (FAR7).